The primary structure comprises 388 residues: Cytochrome b (388 aa).

4 helical membrane-spanning segments follow: residues 38–58, 82–104, 119–139, and 185–205; these read FGCL…FLAM, WLLR…LHIF, VWCL…IGYV, and FFSL…LHLA. 2 residues coordinate heme b: His-88 and His-102. 2 residues coordinate heme b: His-189 and His-203. His-208 provides a ligand contact to a ubiquinone. A run of 4 helical transmembrane segments spans residues 231-251, 295-315, 327-347, and 354-373; these read FYVK…IWIF, AGGV…PFFK, IHQG…WIGC, and FVTI…AITP.

Belongs to the cytochrome b family. The main subunits of complex b-c1 are: cytochrome b, cytochrome c1 and the Rieske protein. Requires heme b as cofactor.

The protein localises to the mitochondrion inner membrane. Functionally, component of the ubiquinol-cytochrome c reductase complex (complex III or cytochrome b-c1 complex) that is part of the mitochondrial respiratory chain. The b-c1 complex mediates electron transfer from ubiquinol to cytochrome c. Contributes to the generation of a proton gradient across the mitochondrial membrane that is then used for ATP synthesis. The polypeptide is Cytochrome b (MT-CYB) (Zea mays (Maize)).